A 95-amino-acid chain; its full sequence is CRISPR-associated endoribonuclease Cas2 (95 aa).

Asp-10 serves as a coordination point for Mg(2+).

It belongs to the CRISPR-associated endoribonuclease Cas2 protein family. In terms of assembly, homodimer, forms a heterotetramer with a Cas1 homodimer. Mg(2+) is required as a cofactor.

CRISPR (clustered regularly interspaced short palindromic repeat), is an adaptive immune system that provides protection against mobile genetic elements (viruses, transposable elements and conjugative plasmids). CRISPR clusters contain sequences complementary to antecedent mobile elements and target invading nucleic acids. CRISPR clusters are transcribed and processed into CRISPR RNA (crRNA). Functions as a ssRNA-specific endoribonuclease. Involved in the integration of spacer DNA into the CRISPR cassette. This is CRISPR-associated endoribonuclease Cas2 from Geobacter sulfurreducens (strain ATCC 51573 / DSM 12127 / PCA).